We begin with the raw amino-acid sequence, 669 residues long: DNA ligase (669 aa).

NAD(+) is bound by residues 33 to 37 (DLTYD), 82 to 83 (SL), and Glu-115. Lys-117 (N6-AMP-lysine intermediate) is an active-site residue. Positions 138, 172, 286, and 310 each coordinate NAD(+). The Zn(2+) site is built by Cys-401, Cys-404, Cys-417, and Cys-422.

This sequence belongs to the NAD-dependent DNA ligase family. LigA subfamily. The cofactor is Mg(2+). It depends on Mn(2+) as a cofactor.

The catalysed reaction is NAD(+) + (deoxyribonucleotide)n-3'-hydroxyl + 5'-phospho-(deoxyribonucleotide)m = (deoxyribonucleotide)n+m + AMP + beta-nicotinamide D-nucleotide.. In terms of biological role, DNA ligase that catalyzes the formation of phosphodiester linkages between 5'-phosphoryl and 3'-hydroxyl groups in double-stranded DNA using NAD as a coenzyme and as the energy source for the reaction. It is essential for DNA replication and repair of damaged DNA. The chain is DNA ligase from Borrelia hermsii (strain HS1 / DAH).